The chain runs to 299 residues: Bifunctional protein FolD (299 aa).

Residues Gly169–Ser171, Ser194, and Ile235 contribute to the NADP(+) site.

Belongs to the tetrahydrofolate dehydrogenase/cyclohydrolase family. In terms of assembly, homodimer.

It catalyses the reaction (6R)-5,10-methylene-5,6,7,8-tetrahydrofolate + NADP(+) = (6R)-5,10-methenyltetrahydrofolate + NADPH. It carries out the reaction (6R)-5,10-methenyltetrahydrofolate + H2O = (6R)-10-formyltetrahydrofolate + H(+). Its pathway is one-carbon metabolism; tetrahydrofolate interconversion. Catalyzes the oxidation of 5,10-methylenetetrahydrofolate to 5,10-methenyltetrahydrofolate and then the hydrolysis of 5,10-methenyltetrahydrofolate to 10-formyltetrahydrofolate. This is Bifunctional protein FolD from Nostoc sp. (strain PCC 7120 / SAG 25.82 / UTEX 2576).